Reading from the N-terminus, the 341-residue chain is 4-hydroxythreonine-4-phosphate dehydrogenase (341 aa).

Thr-126 contacts substrate. His-161, His-206, and His-272 together coordinate a divalent metal cation. Lys-280, Asn-289, and Arg-298 together coordinate substrate.

This sequence belongs to the PdxA family. In terms of assembly, homodimer. A divalent metal cation serves as cofactor.

The protein resides in the cytoplasm. It carries out the reaction 4-(phosphooxy)-L-threonine + NAD(+) = 3-amino-2-oxopropyl phosphate + CO2 + NADH. It functions in the pathway cofactor biosynthesis; pyridoxine 5'-phosphate biosynthesis; pyridoxine 5'-phosphate from D-erythrose 4-phosphate: step 4/5. Functionally, catalyzes the NAD(P)-dependent oxidation of 4-(phosphooxy)-L-threonine (HTP) into 2-amino-3-oxo-4-(phosphooxy)butyric acid which spontaneously decarboxylates to form 3-amino-2-oxopropyl phosphate (AHAP). This Thermosynechococcus vestitus (strain NIES-2133 / IAM M-273 / BP-1) protein is 4-hydroxythreonine-4-phosphate dehydrogenase.